We begin with the raw amino-acid sequence, 294 residues long: Bifunctional protein FolD (294 aa).

NADP(+) is bound by residues 164-166 (GRS), S193, and I234.

The protein belongs to the tetrahydrofolate dehydrogenase/cyclohydrolase family. As to quaternary structure, homodimer.

The catalysed reaction is (6R)-5,10-methylene-5,6,7,8-tetrahydrofolate + NADP(+) = (6R)-5,10-methenyltetrahydrofolate + NADPH. The enzyme catalyses (6R)-5,10-methenyltetrahydrofolate + H2O = (6R)-10-formyltetrahydrofolate + H(+). It functions in the pathway one-carbon metabolism; tetrahydrofolate interconversion. In terms of biological role, catalyzes the oxidation of 5,10-methylenetetrahydrofolate to 5,10-methenyltetrahydrofolate and then the hydrolysis of 5,10-methenyltetrahydrofolate to 10-formyltetrahydrofolate. The chain is Bifunctional protein FolD from Flavobacterium psychrophilum (strain ATCC 49511 / DSM 21280 / CIP 103535 / JIP02/86).